Consider the following 1016-residue polypeptide: DNA polymerase I (1016 aa).

The 5'-3' exonuclease domain occupies 1–308 (MPNSIWTSSD…MEFTTLTRRV (308 aa)). The disordered stretch occupies residues 334-361 (GPDLDAAEPEPVAGGIPEVSGESVPMPP). One can recognise a 3'-5' exonuclease domain in the interval 394 to 630 (SAYVTIRDLV…MEARGITVDR (237 aa)). The polymerase stretch occupies residues 768-1016 (GRKIRTAFIS…RAATNWDEAH (249 aa)).

The protein belongs to the DNA polymerase type-A family. Single-chain monomer with multiple functions.

The catalysed reaction is DNA(n) + a 2'-deoxyribonucleoside 5'-triphosphate = DNA(n+1) + diphosphate. Functionally, in addition to polymerase activity, this DNA polymerase exhibits 3'-5' and 5'-3' exonuclease activity. The protein is DNA polymerase I (polA) of Rhizobium leguminosarum.